A 175-amino-acid chain; its full sequence is Crossover junction endodeoxyribonuclease RuvC (175 aa).

Active-site residues include Asp-11, Glu-71, and His-143. Asp-11, Glu-71, and His-143 together coordinate Mg(2+).

The protein belongs to the RuvC family. As to quaternary structure, homodimer which binds Holliday junction (HJ) DNA. The HJ becomes 2-fold symmetrical on binding to RuvC with unstacked arms; it has a different conformation from HJ DNA in complex with RuvA. In the full resolvosome a probable DNA-RuvA(4)-RuvB(12)-RuvC(2) complex forms which resolves the HJ. Requires Mg(2+) as cofactor.

It localises to the cytoplasm. The catalysed reaction is Endonucleolytic cleavage at a junction such as a reciprocal single-stranded crossover between two homologous DNA duplexes (Holliday junction).. Its function is as follows. The RuvA-RuvB-RuvC complex processes Holliday junction (HJ) DNA during genetic recombination and DNA repair. Endonuclease that resolves HJ intermediates. Cleaves cruciform DNA by making single-stranded nicks across the HJ at symmetrical positions within the homologous arms, yielding a 5'-phosphate and a 3'-hydroxyl group; requires a central core of homology in the junction. The consensus cleavage sequence is 5'-(A/T)TT(C/G)-3'. Cleavage occurs on the 3'-side of the TT dinucleotide at the point of strand exchange. HJ branch migration catalyzed by RuvA-RuvB allows RuvC to scan DNA until it finds its consensus sequence, where it cleaves and resolves the cruciform DNA. This chain is Crossover junction endodeoxyribonuclease RuvC, found in Parvibaculum lavamentivorans (strain DS-1 / DSM 13023 / NCIMB 13966).